Consider the following 272-residue polypeptide: Glutamate racemase (272 aa).

Residues 13–14 (DS) and 45–46 (YG) contribute to the substrate site. Cys-76 functions as the Proton donor/acceptor in the catalytic mechanism. Substrate is bound at residue 77–78 (NT). Cys-186 acts as the Proton donor/acceptor in catalysis. 187–188 (TH) serves as a coordination point for substrate.

This sequence belongs to the aspartate/glutamate racemases family.

The catalysed reaction is L-glutamate = D-glutamate. It participates in cell wall biogenesis; peptidoglycan biosynthesis. In terms of biological role, provides the (R)-glutamate required for cell wall biosynthesis. The sequence is that of Glutamate racemase from Cupriavidus pinatubonensis (strain JMP 134 / LMG 1197) (Cupriavidus necator (strain JMP 134)).